The primary structure comprises 106 residues: Large ribosomal subunit protein eL30 (106 aa).

Belongs to the eukaryotic ribosomal protein eL30 family. As to quaternary structure, component of the large ribosomal subunit. Mature ribosomes consist of a small (40S) and a large (60S) subunit. The 40S subunit contains about 32 different proteins and 1 molecule of RNA (18S). The 60S subunit contains 45 different proteins and 3 molecules of RNA (25S, 5.8S and 5S).

The protein resides in the cytoplasm. Component of the ribosome, a large ribonucleoprotein complex responsible for the synthesis of proteins in the cell. The small ribosomal subunit (SSU) binds messenger RNAs (mRNAs) and translates the encoded message by selecting cognate aminoacyl-transfer RNA (tRNA) molecules. The large subunit (LSU) contains the ribosomal catalytic site termed the peptidyl transferase center (PTC), which catalyzes the formation of peptide bonds, thereby polymerizing the amino acids delivered by tRNAs into a polypeptide chain. The nascent polypeptides leave the ribosome through a tunnel in the LSU and interact with protein factors that function in enzymatic processing, targeting, and the membrane insertion of nascent chains at the exit of the ribosomal tunnel. The chain is Large ribosomal subunit protein eL30 from Candida albicans (strain SC5314 / ATCC MYA-2876) (Yeast).